We begin with the raw amino-acid sequence, 331 residues long: Phosphoenolpyruvate transferase (331 aa).

Position 63 (Asp-63) interacts with 7,8-didemethyl-8-hydroxy-5-deazariboflavin.

It belongs to the CofD family. In terms of assembly, homodimer. Mg(2+) serves as cofactor.

It carries out the reaction enolpyruvoyl-2-diphospho-5'-guanosine + 7,8-didemethyl-8-hydroxy-5-deazariboflavin = dehydro coenzyme F420-0 + GMP + H(+). Its pathway is cofactor biosynthesis; coenzyme F420 biosynthesis. Catalyzes the transfer of the phosphoenolpyruvate moiety from enoylpyruvoyl-2-diphospho-5'-guanosine (EPPG) to 7,8-didemethyl-8-hydroxy-5-deazariboflavin (FO) with the formation of dehydro coenzyme F420-0 and GMP. The protein is Phosphoenolpyruvate transferase of Mycobacterium sp. (strain JLS).